A 179-amino-acid chain; its full sequence is ATP synthase subunit delta (179 aa).

The protein belongs to the ATPase delta chain family. F-type ATPases have 2 components, F(1) - the catalytic core - and F(0) - the membrane proton channel. F(1) has five subunits: alpha(3), beta(3), gamma(1), delta(1), epsilon(1). F(0) has three main subunits: a(1), b(2) and c(10-14). The alpha and beta chains form an alternating ring which encloses part of the gamma chain. F(1) is attached to F(0) by a central stalk formed by the gamma and epsilon chains, while a peripheral stalk is formed by the delta and b chains.

It is found in the cell membrane. In terms of biological role, f(1)F(0) ATP synthase produces ATP from ADP in the presence of a proton or sodium gradient. F-type ATPases consist of two structural domains, F(1) containing the extramembraneous catalytic core and F(0) containing the membrane proton channel, linked together by a central stalk and a peripheral stalk. During catalysis, ATP synthesis in the catalytic domain of F(1) is coupled via a rotary mechanism of the central stalk subunits to proton translocation. Its function is as follows. This protein is part of the stalk that links CF(0) to CF(1). It either transmits conformational changes from CF(0) to CF(1) or is implicated in proton conduction. The chain is ATP synthase subunit delta from Clostridium botulinum (strain ATCC 19397 / Type A).